The chain runs to 198 residues: uncharacterized protein (198 aa).

The disordered stretch occupies residues Gly40–Pro111. The segment covering Ser60–Arg74 has biased composition (low complexity).

This is an uncharacterized protein from Homo sapiens (Human).